A 119-amino-acid chain; its full sequence is DNA-directed RNA polymerase subunit omega (119 aa).

The protein belongs to the RNA polymerase subunit omega family. As to quaternary structure, the RNAP catalytic core consists of 2 alpha, 1 beta, 1 beta' and 1 omega subunit. When a sigma factor is associated with the core the holoenzyme is formed, which can initiate transcription.

The catalysed reaction is RNA(n) + a ribonucleoside 5'-triphosphate = RNA(n+1) + diphosphate. In terms of biological role, promotes RNA polymerase assembly. Latches the N- and C-terminal regions of the beta' subunit thereby facilitating its interaction with the beta and alpha subunits. This chain is DNA-directed RNA polymerase subunit omega, found in Caulobacter sp. (strain K31).